The following is a 333-amino-acid chain: Ribosomal RNA small subunit methyltransferase H (333 aa).

S-adenosyl-L-methionine contacts are provided by residues 31 to 33 (GGY), Asp49, Phe76, Asp134, and Gln141.

It belongs to the methyltransferase superfamily. RsmH family.

Its subcellular location is the cytoplasm. It carries out the reaction cytidine(1402) in 16S rRNA + S-adenosyl-L-methionine = N(4)-methylcytidine(1402) in 16S rRNA + S-adenosyl-L-homocysteine + H(+). Functionally, specifically methylates the N4 position of cytidine in position 1402 (C1402) of 16S rRNA. In Wolbachia sp. subsp. Brugia malayi (strain TRS), this protein is Ribosomal RNA small subunit methyltransferase H.